The following is a 293-amino-acid chain: Putative ribose uptake protein RbsU (293 aa).

The next 10 helical transmembrane spans lie at 5–24, 34–51, 58–80, 95–114, 121–138, 153–170, 177–199, 212–234, 241–263, and 273–292; these read ALLI…TVAS, IIGA…LAVV, TGTN…IITF, TTAF…LGNW, IIGF…RMTV, RAVV…LYSA, IDGL…IYGF, ITWL…LISA, LATG…IYFL, and VITI…TVFI.

The protein belongs to the GRP transporter (TC 2.A.7.5) family.

The protein resides in the cell membrane. In terms of biological role, could be involved in the uptake of ribose. The polypeptide is Putative ribose uptake protein RbsU (rbsU) (Staphylococcus aureus (strain COL)).